We begin with the raw amino-acid sequence, 859 residues long: Catenin delta-1 (859 aa).

The stretch at 15–44 (SVRAQEAQFELLSRALEEERRHVTAQLDRV) forms a coiled coil. A disordered region spans residues 226-254 (IDGPDYATTGRRGANGGDPRRRLRSYEDP). Over residues 243-254 (DPRRRLRSYEDP) the composition is skewed to basic and acidic residues. 10 ARM repeats span residues 279-317 (APNS…HLSY), 320-359 (EDVK…NLSY), 363-401 (RENK…VTGT), 402-446 (LWNL…RVEG), 464-503 (LRNI…LVDS), 513-552 (LRNI…VRRG), 574-614 (AQGY…NLCA), 621-660 (RCIR…NLCG), 661-700 (DNRN…CVIN), and 701-746 (TIHE…GFCL).

It belongs to the beta-catenin family. Interacts with C-cadherin and with zbtb33. In terms of tissue distribution, ubiquitously expressed.

The protein localises to the cell junction. Its subcellular location is the adherens junction. It is found in the cytoplasm. It localises to the nucleus. The protein resides in the cell membrane. Its function is as follows. Key regulator of cell-cell adhesion that associates with and regulates the cell adhesion properties of both C-, E- and N-cadherins, being critical for their surface stability. Beside cell-cell adhesion, regulates gene transcription through several transcription factors including ZBTB33/Kaiso2 and GLIS2, and the activity of Rho family GTPases and downstream cytoskeletal dynamics. Implicated both in cell transformation by SRC and in ligand-induced receptor signaling through the EGF, PDGF, CSF-1 and ERBB2 receptors. Required for gastrulation, axial elongation and development of the craniofacial skeleton and eye. The sequence is that of Catenin delta-1 (ctnnd1) from Xenopus laevis (African clawed frog).